The chain runs to 188 residues: uncharacterized protein (188 aa).

Residues 133 to 153 (PKGRPTMKLQYPKMPPKPKTR) form a disordered region.

Belongs to the IS150/IS1296 orfA family.

This is an uncharacterized protein from Haemophilus influenzae (strain ATCC 51907 / DSM 11121 / KW20 / Rd).